The chain runs to 197 residues: Casparian strip membrane protein 5 (197 aa).

Residues M1 to G34 lie on the Cytoplasmic side of the membrane. The chain crosses the membrane as a helical span at residues V35–A55. The Extracellular segment spans residues T56–Q84. Residues F85–I105 traverse the membrane as a helical segment. Over V106–R117 the chain is Cytoplasmic. The chain crosses the membrane as a helical span at residues L118–A138. Topologically, residues A139–A171 are extracellular. The helical transmembrane segment at V172–V192 threads the bilayer. Over L193–H197 the chain is Cytoplasmic.

This sequence belongs to the Casparian strip membrane proteins (CASP) family. Homodimer and heterodimers.

It is found in the cell membrane. Functionally, regulates membrane-cell wall junctions and localized cell wall deposition. Required for establishment of the Casparian strip membrane domain (CSD) and the subsequent formation of Casparian strips, a cell wall modification of the root endodermis that determines an apoplastic barrier between the intraorganismal apoplasm and the extraorganismal apoplasm and prevents lateral diffusion. In Lotus japonicus (Lotus corniculatus var. japonicus), this protein is Casparian strip membrane protein 5.